The chain runs to 135 residues: Basic phospholipase A2 6 (135 aa).

Cystine bridges form between C28–C87, C42–C134, C44–C60, C59–C115, C66–C108, C76–C101, and C94–C106. Ca(2+)-binding residues include Y43, G45, and G47. Residue H63 is part of the active site. D64 lines the Ca(2+) pocket. The active site involves D109.

Belongs to the phospholipase A2 family. Group I subfamily. D49 sub-subfamily. The cofactor is Ca(2+). As to expression, expressed by the venom gland.

It localises to the secreted. The catalysed reaction is a 1,2-diacyl-sn-glycero-3-phosphocholine + H2O = a 1-acyl-sn-glycero-3-phosphocholine + a fatty acid + H(+). Snake venom phospholipase A2 (PLA2) that inhibits neuromuscular transmission by blocking acetylcholine release from the nerve termini. PLA2 catalyzes the calcium-dependent hydrolysis of the 2-acyl groups in 3-sn-phosphoglycerides. Very weakly suppress the acetylcholine (ACh)-evoked current mediated by alpha-7-similar nAChRs in L.stagnalis neurons. The chain is Basic phospholipase A2 6 from Bungarus fasciatus (Banded krait).